The following is a 94-amino-acid chain: ATP synthase F(0) complex subunit f, mitochondrial (94 aa).

Ala-2 bears the N-acetylalanine mark. Phosphoserine is present on Ser-3. Lys-22 is subject to N6-acetyllysine. Residues 68–85 (MVLACYVLFSYSFSYKHL) form a helical membrane-spanning segment.

Belongs to the ATPase F chain family. Component of the ATP synthase complex composed at least of ATP5F1A/subunit alpha, ATP5F1B/subunit beta, ATP5MC1/subunit c (homooctomer), MT-ATP6/subunit a, MT-ATP8/subunit 8, ATP5ME/subunit e, ATP5MF/subunit f, ATP5MG/subunit g, ATP5MK/subunit k, ATP5MJ/subunit j, ATP5F1C/subunit gamma, ATP5F1D/subunit delta, ATP5F1E/subunit epsilon, ATP5PF/subunit F6, ATP5PB/subunit b, ATP5PD/subunit d, ATP5PO/subunit OSCP. ATP synthase complex consists of a soluble F(1) head domain (subunits alpha(3) and beta(3)) - the catalytic core - and a membrane F(0) domain - the membrane proton channel (subunits c, a, 8, e, f, g, k and j). These two domains are linked by a central stalk (subunits gamma, delta, and epsilon) rotating inside the F1 region and a stationary peripheral stalk (subunits F6, b, d, and OSCP).

The protein resides in the mitochondrion. It is found in the mitochondrion inner membrane. Subunit f, of the mitochondrial membrane ATP synthase complex (F(1)F(0) ATP synthase or Complex V) that produces ATP from ADP in the presence of a proton gradient across the membrane which is generated by electron transport complexes of the respiratory chain. ATP synthase complex consist of a soluble F(1) head domain - the catalytic core - and a membrane F(1) domain - the membrane proton channel. These two domains are linked by a central stalk rotating inside the F(1) region and a stationary peripheral stalk. During catalysis, ATP synthesis in the catalytic domain of F(1) is coupled via a rotary mechanism of the central stalk subunits to proton translocation. In vivo, can only synthesize ATP although its ATP hydrolase activity can be activated artificially in vitro. Part of the complex F(0) domain. This is ATP synthase F(0) complex subunit f, mitochondrial from Pongo abelii (Sumatran orangutan).